The following is a 67-amino-acid chain: MSLFPVIVVFGLSFPPIFFELLLSLAIFWLVRRVLVPTGIYDFVWHPALFNTALYCCLFYLISRLFV.

2 helical membrane-spanning segments follow: residues 3–23 and 43–63; these read LFPV…ELLL and FVWH…YLIS.

The protein belongs to the AaeX family.

It localises to the cell membrane. This is Protein AaeX from Escherichia coli (strain K12 / DH10B).